Reading from the N-terminus, the 81-residue chain is Sec-independent protein translocase protein TatA (81 aa).

Residues 1 to 21 (MGGLQPWHWVIVIAVFVLLFG) traverse the membrane as a helical segment. Residues 46–56 (MQAESKGDEPK) are compositionally biased toward basic and acidic residues. The segment at 46 to 81 (MQAESKGDEPKPATPIASERVDTTAPEQQSTDRHTA) is disordered.

This sequence belongs to the TatA/E family. In terms of assembly, the Tat system comprises two distinct complexes: a TatABC complex, containing multiple copies of TatA, TatB and TatC subunits, and a separate TatA complex, containing only TatA subunits. Substrates initially bind to the TatABC complex, which probably triggers association of the separate TatA complex to form the active translocon.

The protein localises to the cell membrane. Its function is as follows. Part of the twin-arginine translocation (Tat) system that transports large folded proteins containing a characteristic twin-arginine motif in their signal peptide across membranes. TatA could form the protein-conducting channel of the Tat system. This is Sec-independent protein translocase protein TatA from Mycolicibacterium smegmatis (strain ATCC 700084 / mc(2)155) (Mycobacterium smegmatis).